The sequence spans 612 residues: Chaperone protein DnaK (612 aa).

The residue at position 174 (Thr174) is a Phosphothreonine; by autocatalysis. The interval 578–612 is disordered; the sequence is GAQAGAQGQGAAGGQKQDGNVYDADYKVVDDDKKE. Residues 601-612 are compositionally biased toward basic and acidic residues; it reads ADYKVVDDDKKE.

This sequence belongs to the heat shock protein 70 family.

In terms of biological role, acts as a chaperone. The sequence is that of Chaperone protein DnaK from Moorella thermoacetica (strain ATCC 39073 / JCM 9320).